We begin with the raw amino-acid sequence, 431 residues long: Probable zinc metalloprotease Lema_P086240 (431 aa).

Asn-46 carries N-linked (GlcNAc...) asparagine glycosylation. His-117, Asp-137, and Glu-170 together coordinate Zn(2+). N-linked (GlcNAc...) asparagine glycosylation is present at Asn-185. Residue Asp-197 participates in Zn(2+) binding. 5 N-linked (GlcNAc...) asparagine glycosylation sites follow: Asn-258, Asn-310, Asn-349, Asn-359, and Asn-369. In terms of domain architecture, Fibronectin type-III spans 344 to 431 (PGMPRNVTID…KSPAVYPFPG (88 aa)).

It belongs to the peptidase M28 family. M28B subfamily. Zn(2+) serves as cofactor.

The protein localises to the secreted. The polypeptide is Probable zinc metalloprotease Lema_P086240 (Leptosphaeria maculans (strain JN3 / isolate v23.1.3 / race Av1-4-5-6-7-8) (Blackleg fungus)).